Reading from the N-terminus, the 297-residue chain is Craniofacial development protein 1 (297 aa).

Acidic residues-rich tracts occupy residues 1–18 (MEEF…DEDY), 25–43 (YSED…DGEE), and 70–79 (LEEDEEDANE). Disordered regions lie at residues 1–157 (MEEF…KPKE) and 190–222 (FFKQ…SSGM). Phosphoserine occurs at positions 81, 84, and 85. A compositionally biased stretch (basic and acidic residues) spans 97–111 (KGVESEDARKKKEDE). The residue at position 115 (S115) is a Phosphoserine. 2 stretches are compositionally biased toward basic and acidic residues: residues 147-157 (VKAERLEKPKE) and 190-199 (FFKQNEKEKP). Residue K148 forms a Glycyl lysine isopeptide (Lys-Gly) (interchain with G-Cter in SUMO2) linkage. Residues 176–215 (VIKEVDATSKEAKSFFKQNEKEKPQSNVPPAVPSLPAGSG) form a hydrophilic region. A Phosphoserine modification is found at S214. The BCNT-C domain maps to 216-297 (LKRSSGMSSL…RDLRLSKMKP (82 aa)). An N6-methyllysine modification is found at K217. S248 carries the post-translational modification Phosphoserine.

Brain.

In terms of biological role, may play a role during embryogenesis. This chain is Craniofacial development protein 1 (CFDP1), found in Bos taurus (Bovine).